Reading from the N-terminus, the 427-residue chain is Sensor histidine kinase ArsS (427 aa).

2 consecutive transmembrane segments (helical) span residues 3–23 (FSIF…FGAF) and 131–151 (NYFL…LFVL). The 53-residue stretch at 151–203 (LQSLLPLRELRSQVKPFAQGDKSVSCKSKQKDEIGDLANEFDNCILKINAMNE) folds into the HAMP domain. The region spanning 211 to 398 (SIMHELRTPI…LSYHYSNGRI (188 aa)) is the Histidine kinase domain. At histidine 214 the chain carries Phosphohistidine; by autocatalysis.

Post-translationally, autophosphorylated.

It localises to the membrane. The enzyme catalyses ATP + protein L-histidine = ADP + protein N-phospho-L-histidine.. Functionally, member of the two-component regulatory system ArsS/ArsR that regulates genes involved in biofilm formation and acid adaptation by acting on major ammonia-producing pathways. Functions as a sensor protein kinase which is autophosphorylated at a histidine residue and transfers its phosphate group to the conserved aspartic acid residue in the regulatory domain of ArsR. In turn, ArsR binds to the upstream promoter regions of target genes including ureA, amiE and amiF to positively regulate their expression in response to acidic pH. Also participates in acidic acclimatation in a phosphorylation-independent pathway by regulating acid-induced trafficking of urease and its accessory proteins to the inner membrane. The protein is Sensor histidine kinase ArsS of Helicobacter pylori (strain ATCC 700392 / 26695) (Campylobacter pylori).